Reading from the N-terminus, the 154-residue chain is Transcriptional repressor NrdR (154 aa).

Residues 1 to 22 (MECPNCHKNASRVIDSRPSDEN) are disordered. A zinc finger lies at 3–34 (CPNCHKNASRVIDSRPSDENRAIRRRRECENC). The 91-residue stretch at 49–139 (LLVIKNDGTR…IYRQFKDVSG (91 aa)) folds into the ATP-cone domain.

Belongs to the NrdR family. Requires Zn(2+) as cofactor.

Negatively regulates transcription of bacterial ribonucleotide reductase nrd genes and operons by binding to NrdR-boxes. The chain is Transcriptional repressor NrdR from Lactobacillus gasseri (strain ATCC 33323 / DSM 20243 / BCRC 14619 / CIP 102991 / JCM 1131 / KCTC 3163 / NCIMB 11718 / NCTC 13722 / AM63).